The primary structure comprises 175 residues: ATP-dependent protease subunit HslV (175 aa).

The active site involves Thr2. The Na(+) site is built by Gly158, Cys161, and Thr164.

It belongs to the peptidase T1B family. HslV subfamily. In terms of assembly, a double ring-shaped homohexamer of HslV is capped on each side by a ring-shaped HslU homohexamer. The assembly of the HslU/HslV complex is dependent on binding of ATP.

The protein resides in the cytoplasm. The catalysed reaction is ATP-dependent cleavage of peptide bonds with broad specificity.. Allosterically activated by HslU binding. Protease subunit of a proteasome-like degradation complex believed to be a general protein degrading machinery. The polypeptide is ATP-dependent protease subunit HslV (Haemophilus influenzae (strain PittEE)).